The sequence spans 387 residues: MAVTKITDLNLKNKRVLIRADLNVPIKDGQITSYARINASLPTIITVLKQGAASVMVTSHLGRPTEGQYDENLSLYRVVNYLQQKISIPVRLIKDYLNGISFTEKQLLVLENVRFNKGETKNDETLAKQYAALCDIFIMDAFGTAHRAHASTYGIAKYAPLVCAGLLLYNELEVLSKALNQPVRPMVAIVGGSKVSTKLMLLNKLSKISDHLIVGGGIANTFLAAQGYNVGQSLLEPNLINKAKQLLKYKNILLPTDVRVSQELDNAATLKHIREVGNNEKIFDIGDESANRFAKILQQAKTILWNGPVGAFELTHFRQGTKILANAIVSSNAFSIAGGGDTLAAIDYFNLNDKISYLSTGGGAFLSFIEGKTLPAVAMLIERNKNN.

Substrate is bound by residues aspartate 21–asparagine 23, arginine 36, histidine 60–arginine 63, arginine 114, and arginine 147. ATP-binding positions include lysine 198, glutamate 313, and glycine 339 to threonine 342.

It belongs to the phosphoglycerate kinase family. In terms of assembly, monomer.

The protein localises to the cytoplasm. It catalyses the reaction (2R)-3-phosphoglycerate + ATP = (2R)-3-phospho-glyceroyl phosphate + ADP. It participates in carbohydrate degradation; glycolysis; pyruvate from D-glyceraldehyde 3-phosphate: step 2/5. In Baumannia cicadellinicola subsp. Homalodisca coagulata, this protein is Phosphoglycerate kinase.